Reading from the N-terminus, the 90-residue chain is SAGA-associated factor 11 (90 aa).

An SGF11-type zinc finger spans residues 63 to 84 (FSCDNCGRKIAGGRFAQHINKC).

It belongs to the SGF11 family. As to quaternary structure, component of the 1.8 MDa SAGA transcription coactivator-HAT complex. SAGA is built of 5 distinct domains with specialized functions. Within the SAGA complex, SUS1, SGF11, SGF73 and UBP8 form an additional subcomplex of SAGA called the DUB module (deubiquitination module). Interacts directly with SGF73, SUS1 and UBP8.

It is found in the nucleus. Its function is as follows. Functions as a component of the transcription regulatory histone acetylation (HAT) complex SAGA. At the promoters, SAGA is required for recruitment of the basal transcription machinery. It influences RNA polymerase II transcriptional activity through different activities such as TBP interaction and promoter selectivity, interaction with transcription activators, and chromatin modification through histone acetylation and deubiquitination. SAGA acetylates nucleosomal histone H3 to some extent (to form H3K9ac, H3K14ac, H3K18ac and H3K23ac). SAGA interacts with DNA via upstream activating sequences (UASs). Involved in transcriptional regulation of a subset of SAGA-regulated genes. Within the SAGA complex, participates in a subcomplex, that specifically deubiquitinates histones H2B. The polypeptide is SAGA-associated factor 11 (Lodderomyces elongisporus (strain ATCC 11503 / CBS 2605 / JCM 1781 / NBRC 1676 / NRRL YB-4239) (Yeast)).